Consider the following 1045-residue polypeptide: B3 domain-containing protein REM13 (1045 aa).

A DNA-binding region (TF-B3 1) is located at residues 7-96; sequence YPQFFHTLVP…VFHVSNLGPN (90 aa). Residues 121–147 form a disordered region; the sequence is NNGDVCDSEELPKEKKAKTNSEEADAV. The segment covering 130–141 has biased composition (basic and acidic residues); sequence ELPKEKKAKTNS. 2 DNA-binding regions (TF-B3) span residues 157–253 and 305–398; these read CFMA…FCPT and FVTF…CSPE. Residues 423-449 form a disordered region; the sequence is NRDKISNNDKEENMSWERKKDHLKSRD. Positions 474 to 570 form a DNA-binding region, TF-B3 4; sequence SNDSCLVVVS…TPVLSLCPAD (97 aa). The disordered stretch occupies residues 606–625; the sequence is IKDDNSKEKNDKEESKSVDG. DNA-binding regions (TF-B3) lie at residues 643–738, 815–910, and 940–1035; these read FVTL…LRTE, FVTF…LRTK, and FVTL…LKFS.

It localises to the nucleus. The chain is B3 domain-containing protein REM13 (REM13) from Arabidopsis thaliana (Mouse-ear cress).